The following is an 828-amino-acid chain: Glycerol-3-phosphate acyltransferase 1, mitochondrial (828 aa).

Residues 1–87 (MDESALTLGT…FFNPSIPSLG (87 aa)) lie on the Cytoplasmic side of the membrane. The tract at residues 80 to 120 (NPSIPSLGLRNVIYINETHTRHRGWLARRLSYVLFIQERDV) is important for mitochondrial localization. Residues 88–118 (LRNVIYINETHTRHRGWLARRLSYVLFIQER) lie within the membrane without spanning it. Residues 119–828 (DVHKGMFATN…LEYILSFVVL (710 aa)) are Cytoplasmic-facing. Positions 230 to 235 (HRSHID) match the HXXXXD motif motif. CoA-binding residues include R278, R279, K288, R293, and R328. A Phosphoserine modification is found at S380. The disordered stretch occupies residues 435-455 (SRPSDAADEGRDTSINESRNA). Over residues 442–455 (DEGRDTSINESRNA) the composition is skewed to basic and acidic residues. Position 462 (R462) interacts with CoA. 2 positions are modified to phosphoserine: S688 and S695. Residues K780 and K784 each carry the N6-acetyllysine modification.

Belongs to the GPAT/DAPAT family.

The protein localises to the mitochondrion outer membrane. The enzyme catalyses sn-glycerol 3-phosphate + an acyl-CoA = a 1-acyl-sn-glycero-3-phosphate + CoA. The catalysed reaction is (9Z,12Z)-octadecadienoyl-CoA + sn-glycerol 3-phosphate = 1-(9Z,12Z)-octadecadienoyl-sn-glycero-3-phosphate + CoA. It carries out the reaction sn-glycerol 3-phosphate + (9Z)-octadecenoyl-CoA = 1-(9Z-octadecenoyl)-sn-glycero-3-phosphate + CoA. It catalyses the reaction sn-glycerol 3-phosphate + octadecanoyl-CoA = 1-octadecanoyl-sn-glycero-3-phosphate + CoA. The enzyme catalyses sn-glycerol 3-phosphate + hexadecanoyl-CoA = 1-hexadecanoyl-sn-glycero-3-phosphate + CoA. The catalysed reaction is dodecanoyl-CoA + sn-glycerol 3-phosphate = 1-dodecanoyl-sn-glycerol 3-phosphate + CoA. It carries out the reaction 1-acyl-sn-glycero-3-phospho-(1'-sn-glycerol) + an acyl-CoA = a 1,2-diacyl-sn-glycero-3-phospho-(1'-sn-glycerol) + CoA. It participates in phospholipid metabolism; CDP-diacylglycerol biosynthesis; CDP-diacylglycerol from sn-glycerol 3-phosphate: step 1/3. In terms of biological role, mitochondrial membrane protein that catalyzes the essential first step of biosynthesis of glycerolipids such as triglycerides, phosphatidic acids and lysophosphatidic acids. Esterifies acyl-group from acyl-coenzyme A (acyl-CoA) to the sn-1 position of glycerol-3-phosphate, to produce lysophosphatidic acid. Has a narrow hydrophobic binding cleft that selects for a linear acyl chain. Catalytic activity is higher for substrates with a 16-carbon acyl chain. This chain is Glycerol-3-phosphate acyltransferase 1, mitochondrial, found in Homo sapiens (Human).